The following is a 162-amino-acid chain: Troponin C, skeletal muscle (162 aa).

The residue at position 1 (alanine 1) is an N-acetylalanine. EF-hand domains follow at residues 17-52, 53-88, 93-128, and 129-162; these read EMIA…LGQT, PTKE…QMKE, KSEE…SGES, and ITDE…EGVQ. Ca(2+) is bound by residues aspartate 30, aspartate 32, aspartate 36, glutamate 41, aspartate 66, aspartate 68, serine 70, threonine 72, glutamate 77, aspartate 106, asparagine 108, aspartate 110, tyrosine 112, glutamate 117, aspartate 142, asparagine 144, aspartate 146, lysine 148, and glutamate 153.

It belongs to the troponin C family.

Its function is as follows. Troponin is the central regulatory protein of striated muscle contraction. Tn consists of three components: Tn-I which is the inhibitor of actomyosin ATPase, Tn-T which contains the binding site for tropomyosin and Tn-C. The binding of calcium to Tn-C abolishes the inhibitory action of Tn on actin filaments. This is Troponin C, skeletal muscle from Pelophylax lessonae (Pool frog).